We begin with the raw amino-acid sequence, 484 residues long: Cobyric acid synthase (484 aa).

A GATase cobBQ-type domain is found at valine 248 to serine 435. Cysteine 329 acts as the Nucleophile in catalysis. Residue histidine 427 is part of the active site.

The protein belongs to the CobB/CobQ family. CobQ subfamily.

It functions in the pathway cofactor biosynthesis; adenosylcobalamin biosynthesis. Catalyzes amidations at positions B, D, E, and G on adenosylcobyrinic A,C-diamide. NH(2) groups are provided by glutamine, and one molecule of ATP is hydrogenolyzed for each amidation. The chain is Cobyric acid synthase from Pseudomonas putida (strain W619).